Here is a 732-residue protein sequence, read N- to C-terminus: Trehalose phosphorylase (732 aa).

A propeptide spanning residues 1–25 is cleaved from the precursor; it reads MAPPHQFQSKPSDVIRRRLSSAVSS.

It belongs to the glycosyltransferase group 1 family. Glycosyltransferase 4 subfamily. In terms of assembly, homodimer.

The catalysed reaction is alpha,alpha-trehalose + phosphate = alpha-D-glucose + alpha-D-glucose 1-phosphate. Activity abolished by 1 mM Cu(2+). 0.1 mM Cu(2+) reduces trehalose phosphorolysis to 76% and trehalose synthesis to 48% of maximum activity. 1 mM Zn(2+) abolishes trehalose synthesis, and reduces trehalose phosphorolysis to 40% of maximum activity. Unaffected by EDTA. Functionally, reversibly catalyzes the synthesis and degradation of trehalose from glucose and alpha-D-glucose 1-phosphate. The equilibrium lies in the direction of trehalose synthesis. The polypeptide is Trehalose phosphorylase (Grifola frondosa (Maitake)).